The primary structure comprises 460 residues: Putative protein MSS51 homolog, mitochondrial (460 aa).

Positions 105, 108, 124, 127, 133, 137, 145, and 149 each coordinate Zn(2+). Residues 105 to 149 (CAHCRALPSGLSDSKVLRHCKRCRNVYYCGPECQKSDWPAHRRVC) form an MYND-type zinc finger.

This Homo sapiens (Human) protein is Putative protein MSS51 homolog, mitochondrial (MSS51).